The following is a 173-amino-acid chain: Crossover junction endodeoxyribonuclease RuvC (173 aa).

Catalysis depends on residues Asp8, Glu69, and Asp141. Mg(2+)-binding residues include Asp8, Glu69, and Asp141.

The protein belongs to the RuvC family. Homodimer which binds Holliday junction (HJ) DNA. The HJ becomes 2-fold symmetrical on binding to RuvC with unstacked arms; it has a different conformation from HJ DNA in complex with RuvA. In the full resolvosome a probable DNA-RuvA(4)-RuvB(12)-RuvC(2) complex forms which resolves the HJ. The cofactor is Mg(2+).

Its subcellular location is the cytoplasm. It catalyses the reaction Endonucleolytic cleavage at a junction such as a reciprocal single-stranded crossover between two homologous DNA duplexes (Holliday junction).. In terms of biological role, the RuvA-RuvB-RuvC complex processes Holliday junction (HJ) DNA during genetic recombination and DNA repair. Endonuclease that resolves HJ intermediates. Cleaves cruciform DNA by making single-stranded nicks across the HJ at symmetrical positions within the homologous arms, yielding a 5'-phosphate and a 3'-hydroxyl group; requires a central core of homology in the junction. The consensus cleavage sequence is 5'-(A/T)TT(C/G)-3'. Cleavage occurs on the 3'-side of the TT dinucleotide at the point of strand exchange. HJ branch migration catalyzed by RuvA-RuvB allows RuvC to scan DNA until it finds its consensus sequence, where it cleaves and resolves the cruciform DNA. This chain is Crossover junction endodeoxyribonuclease RuvC, found in Xylella fastidiosa (strain Temecula1 / ATCC 700964).